Consider the following 33-residue polypeptide: Cytochrome b6-f complex subunit 8 (33 aa).

Residues 2-22 traverse the membrane as a helical segment; that stretch reads LITLGWASLAALFSFSIAMVV.

The protein belongs to the PetN family. In terms of assembly, the 4 large subunits of the cytochrome b6-f complex are cytochrome b6, subunit IV (17 kDa polypeptide, PetD), cytochrome f and the Rieske protein, while the 4 small subunits are PetG, PetL, PetM and PetN. The complex functions as a dimer.

The protein localises to the plastid. The protein resides in the organellar chromatophore thylakoid membrane. Functionally, component of the cytochrome b6-f complex, which mediates electron transfer between photosystem II (PSII) and photosystem I (PSI), cyclic electron flow around PSI, and state transitions. This is Cytochrome b6-f complex subunit 8 from Paulinella chromatophora.